The sequence spans 121 residues: Protein MGF 110-5L (121 aa).

Residues 1–18 (MLVIFLGILGLLANQVSS) form the signal peptide. Asn62 and Asn116 each carry an N-linked (GlcNAc...) asparagine; by host glycan.

Belongs to the asfivirus MGF 110 family.

Its function is as follows. Plays a role in virus cell tropism, and may be required for efficient virus replication in macrophages. The chain is Protein MGF 110-5L from African swine fever virus (isolate Tick/South Africa/Pretoriuskop Pr4/1996) (ASFV).